Consider the following 112-residue polypeptide: Nitrogenase-stabilizing/protective protein NifW (112 aa).

This sequence belongs to the NifW family. In terms of assembly, homotrimer; associates with NifD.

Its function is as follows. May protect the nitrogenase Fe-Mo protein from oxidative damage. In Rhodopseudomonas palustris (strain BisA53), this protein is Nitrogenase-stabilizing/protective protein NifW.